Reading from the N-terminus, the 354-residue chain is UDP-3-O-acylglucosamine N-acyltransferase (354 aa).

Catalysis depends on His-245, which acts as the Proton acceptor.

This sequence belongs to the transferase hexapeptide repeat family. LpxD subfamily. In terms of assembly, homotrimer.

It catalyses the reaction a UDP-3-O-[(3R)-3-hydroxyacyl]-alpha-D-glucosamine + a (3R)-hydroxyacyl-[ACP] = a UDP-2-N,3-O-bis[(3R)-3-hydroxyacyl]-alpha-D-glucosamine + holo-[ACP] + H(+). It participates in bacterial outer membrane biogenesis; LPS lipid A biosynthesis. Catalyzes the N-acylation of UDP-3-O-acylglucosamine using 3-hydroxyacyl-ACP as the acyl donor. Is involved in the biosynthesis of lipid A, a phosphorylated glycolipid that anchors the lipopolysaccharide to the outer membrane of the cell. This Anaeromyxobacter dehalogenans (strain 2CP-1 / ATCC BAA-258) protein is UDP-3-O-acylglucosamine N-acyltransferase.